The following is a 1380-amino-acid chain: MAQTLSFNGRRRVRKFFGKIPEVAEMPNLIEVQKASYDQFLMVDEPQGGRPDEGLQAVFKSVFPIKDFSGASMLEFVSYEFEAPKFDVEECRQRDLTYAAPLKVTLRLIVFDIDEDTGAKSIKDIKEQNVYMGDMPLMTDNGTFIVNGTERVIVSQMHRSPGVFFDHDKGKSHSSGKLLFAARVIPYRGSWLDIEFDAKDIVHARIDRRRKIPVTSLLMALGMDGEEILDTFYTKSLYQRDGEGWRVPFQPDALKGQKALADLIDADTGEVVVEGGKKLTPRLLRQLQDKGLKALKATDDDLYGNYLAEDVVNFETGEIYLEAGDEIDEKTLPVILSAGFDEIPVLDIDHINIGAYIRNTLAADKNENRQDALFDIYRVMRPGEPPTMDSAEAMFNALFFDAERYDLSAVGRVKMNMRLDLDVPDTVRTLRKEDILAVVKMLVELRDGKGEIDDIDNLGNRRVRSVGELMENQYRLGLLRMERAIKERMSSIEIDTVMPQDLINAKPAAAAVREFFGSSQLSQFMDQVNPLSEITHKRRLSALGPGGLTRERAGFEVRDVHPTHYGRICPIETPEGPNIGLINSLATFARVNKYGFIESPYRKIVDGKVTSDVVYLSAMEEAKYHVAQANSVLDEDGSFSEEFVVCRHAGEVMLAPRDNINLMDVSPKQLVSVAAALIPFLENDDANRALMGSNMQRQAVPLLRAEAPFVGTGMEPVVARDSGAAIAARRGGIVDQVDATRIVIRATEDLDPSKSGVDIYRLQKFQRSNQNTCVNQRPLVTVGDVLNKGDIIADGPSTDLGDLALGRNALVAFMPWNGYNYEDSILLSERIVRDDVFTSIHIEEFEVMARDTKLGPEEITRDIPNVSEEALKNLDEAGIVYIGAEVQPGDILVGKITPKGESPMTPEEKLLRAIFGEKASDVRDTSMRMPPGTFGTVVEVRVFNRHGVEKDERAMAIEREEIERLAKDRDDEQAILDRNVYARLVDMLRGHVAVAGPKGFKKGTELSNAVISEYPRSQWWMFAIEDEKAQGEIEALRGQYDESKSRLEQRFMDKVEKVQRGDEMPPGVMKMVKVFVAVKRKIQPGDKMAGRHGNKGVVSRIVPIEDMPFLEDGTHVDVVLNPLGVPSRMNVGQILETHLGWACAGMGKKIGAMLDAYKAGADIQPLRDTIDSVIGSGPKGEPIKQYDDESIVRLAEQTRRGVSIATPVFDGAVEADVNEMLEQAGLKVTGQSTLYDGRTGETFDRQVTVGYIYMLKLNHLVDDKIHARSIGPYSLVTQQPLGGKAQFGGQRFGEMEVWALEAYGAAYTLQEMLTVKSDDVAGRTKVYEAIVRGDDTFEAGIPESFNVLVKEMRSLGLSVELENSKVDEVGASAQLPDAAE.

The protein belongs to the RNA polymerase beta chain family. The RNAP catalytic core consists of 2 alpha, 1 beta, 1 beta' and 1 omega subunit. When a sigma factor is associated with the core the holoenzyme is formed, which can initiate transcription.

It catalyses the reaction RNA(n) + a ribonucleoside 5'-triphosphate = RNA(n+1) + diphosphate. Functionally, DNA-dependent RNA polymerase catalyzes the transcription of DNA into RNA using the four ribonucleoside triphosphates as substrates. This Sinorhizobium medicae (strain WSM419) (Ensifer medicae) protein is DNA-directed RNA polymerase subunit beta.